Consider the following 212-residue polypeptide: External core antigen (212 aa).

Residues 1–19 (MQLFHLCLIISCSCPTVQA) form the signal peptide. The HBEAG stretch occupies residues 25-27 (GWL). The segment at 165-212 (NAPILSTLPETTVVRRRGRSPRRRTPSPRRRRSQSPRRRRSQSRESQC) is disordered. A compositionally biased stretch (basic residues) spans 178 to 205 (VRRRGRSPRRRTPSPRRRRSQSPRRRRS). One copy of the 1; half-length repeat lies at 184–190 (SPRRRTP). Positions 184 to 206 (SPRRRTPSPRRRRSQSPRRRRSQ) are 3 X 8 AA repeats of S-P-R-R-R-R-S-Q. Residues 184-212 (SPRRRTPSPRRRRSQSPRRRRSQSRESQC) constitute a propeptide that is removed on maturation. 2 consecutive repeat copies span residues 191–198 (SPRRRRSQ) and 199–206 (SPRRRRSQ).

The protein belongs to the orthohepadnavirus precore antigen family. Homodimerizes. In terms of processing, phosphorylated. Post-translationally, cleaved by host furin.

It is found in the secreted. Its subcellular location is the host nucleus. May regulate immune response to the intracellular capsid in acting as a T-cell tolerogen, by having an immunoregulatory effect which prevents destruction of infected cells by cytotoxic T-cells. This immune regulation may predispose to chronicity during perinatal infections and prevent severe liver injury during adult infections. This chain is External core antigen, found in Homo sapiens (Human).